A 215-amino-acid polypeptide reads, in one-letter code: N-(5'-phosphoribosyl)anthranilate isomerase (215 aa).

Belongs to the TrpF family.

It catalyses the reaction N-(5-phospho-beta-D-ribosyl)anthranilate = 1-(2-carboxyphenylamino)-1-deoxy-D-ribulose 5-phosphate. It participates in amino-acid biosynthesis; L-tryptophan biosynthesis; L-tryptophan from chorismate: step 3/5. This Chlorobium phaeobacteroides (strain DSM 266 / SMG 266 / 2430) protein is N-(5'-phosphoribosyl)anthranilate isomerase.